A 359-amino-acid polypeptide reads, in one-letter code: tRNA-specific 2-thiouridylase MnmA (359 aa).

Residues 6 to 13 and Leu32 contribute to the ATP site; that span reads AMSGGVDS. Residue Cys97 is the Nucleophile of the active site. Cys97 and Cys195 form a disulfide bridge. Gly121 is an ATP binding site. Residues 144–146 form an interaction with tRNA region; sequence KDQ. Cys195 functions as the Cysteine persulfide intermediate in the catalytic mechanism.

It belongs to the MnmA/TRMU family.

Its subcellular location is the cytoplasm. It carries out the reaction S-sulfanyl-L-cysteinyl-[protein] + uridine(34) in tRNA + AH2 + ATP = 2-thiouridine(34) in tRNA + L-cysteinyl-[protein] + A + AMP + diphosphate + H(+). In terms of biological role, catalyzes the 2-thiolation of uridine at the wobble position (U34) of tRNA, leading to the formation of s(2)U34. This chain is tRNA-specific 2-thiouridylase MnmA, found in Tropheryma whipplei (strain Twist) (Whipple's bacillus).